The following is a 1123-amino-acid chain: Telomerase reverse transcriptase (1123 aa).

2 disordered regions span residues 191-242 (ENKR…KTTK) and 410-439 (GTTS…PKCP). The span at 201 to 210 (QPPTKRQWLS) shows a compositional bias: polar residues. The region spanning 596–929 (LVDDAEAESS…PFVRWTGLLI (334 aa)) is the Reverse transcriptase domain. The Mg(2+) site is built by Asp691, Asp860, and Asp861.

The protein belongs to the reverse transcriptase family. Telomerase subfamily. As to quaternary structure, component of the telomerase ribonucleoprotein complex. Interacts with POT1A.

The protein resides in the nucleus. Its subcellular location is the chromosome. The protein localises to the telomere. The enzyme catalyses DNA(n) + a 2'-deoxyribonucleoside 5'-triphosphate = DNA(n+1) + diphosphate. Telomerase is a ribonucleoprotein enzyme essential for the replication of chromosome termini in most eukaryotes. It elongates telomeres. It is a reverse transcriptase that adds simple sequence repeats to chromosome ends by copying a template sequence within the RNA component of the enzyme. Required to prevent genome instability induced by breakage-fusion-bridge (BFB) cycles. Can extend completely non-telomeric sequences using RNA template in vitro. This Arabidopsis thaliana (Mouse-ear cress) protein is Telomerase reverse transcriptase (TERT).